The following is a 354-amino-acid chain: Guanine nucleotide-binding protein G(t) subunit alpha-3 (354 aa).

The tract at residues 1-26 (MGIGISSESKESAKRSKELEKKLQED) is disordered. A lipid anchor (N-myristoyl glycine) is attached at Gly2. Over residues 8 to 26 (ESKESAKRSKELEKKLQED) the composition is skewed to basic and acidic residues. In terms of domain architecture, G-alpha spans 32–354 (RTVKLLLLGA…KENLKDCGLF (323 aa)). Residues 35-48 (KLLLLGAGESGKST) form a G1 motif region. GTP is bound by residues 40–47 (GAGESGKS), 175–181 (LHSRVKT), 200–204 (DVGGQ), 269–272 (NKKD), and Ala326. Residues Ser47 and Thr181 each coordinate Mg(2+). Residues 173 to 181 (DVLHSRVKT) form a G2 motif region. Positions 196–205 (FRMFDVGGQR) are G3 motif. Residues 265 to 272 (VLFLNKKD) form a G4 motif region. Residues 324-329 (TCATDT) form a G5 motif region.

The protein belongs to the G-alpha family. G(i/o/t/z) subfamily. G proteins are composed of 3 units; alpha, beta and gamma, respectively GNAT3, GNB1 and GNG13 for Gustducin heterotrimer for bitter taste transduction. The alpha chain contains the guanine nucleotide binding site. Component of the TAS2R14-GNAT3 complex, consisting of TAS2R14, GNAT3, GNB1 and GNG2; within the complex interacts with TAS2R14; this complex plays a role in the perception of bitterness. Gustducin heterotrimer may also be composed of GNAT3, GNB3 and GNG13. In terms of tissue distribution, expressed in epithelial cells of taste buds of the circumvallate, foliate and fungiform. Detected in various region of the respiratory track. Expressed also in spermatozoa.

The protein resides in the cytoplasm. Guanine nucleotide-binding protein (G protein) alpha subunit playing a prominent role in bitter and sweet taste transduction as well as in umami (monosodium glutamate, monopotassium glutamate, and inosine monophosphate) taste transduction. This is Guanine nucleotide-binding protein G(t) subunit alpha-3 (GNAT3) from Bos taurus (Bovine).